Consider the following 325-residue polypeptide: Mitochondrial citrate transporter C (325 aa).

3 Solcar repeats span residues 15 to 105 (ASPA…YKQM), 117 to 208 (KATF…LKAF), and 221 to 310 (LPSY…LKGK). 6 helical membrane passes run 21–41 (LIAGGGAGMMEALVCHPLDTI), 82–102 (GAVLGGIIPKMAIRFTSYESY), 121–141 (LAGLAAGVTEAVAVVNPMEVV), 187–207 (TALRQGTNQAANFTAYTELKA), 221–241 (LPSYQTTFIGLISGAVGPFSN), and 282–303 (FYKGITPRVMRVAPGQAVTFTV).

Belongs to the mitochondrial carrier (TC 2.A.29) family.

It localises to the mitochondrion inner membrane. Mitochondrial transporter that does not mediate citrate export from mitochondria to cytoplasm. Its exact function has still to be determined. The chain is Mitochondrial citrate transporter C from Aspergillus niger (strain ATCC 1015 / CBS 113.46 / FGSC A1144 / LSHB Ac4 / NCTC 3858a / NRRL 328 / USDA 3528.7).